A 253-amino-acid chain; its full sequence is Adenosylcobinamide-GDP ribazoletransferase (253 aa).

4 helical membrane passes run 33-53 (ISPI…YLIL), 106-126 (VGSG…VALL), 132-152 (LYTI…SLYI), and 178-198 (ILLL…FIIF).

The protein belongs to the CobS family. Mg(2+) is required as a cofactor.

It localises to the cell membrane. The enzyme catalyses alpha-ribazole + adenosylcob(III)inamide-GDP = adenosylcob(III)alamin + GMP + H(+). It carries out the reaction alpha-ribazole 5'-phosphate + adenosylcob(III)inamide-GDP = adenosylcob(III)alamin 5'-phosphate + GMP + H(+). It participates in cofactor biosynthesis; adenosylcobalamin biosynthesis; adenosylcobalamin from cob(II)yrinate a,c-diamide: step 7/7. Joins adenosylcobinamide-GDP and alpha-ribazole to generate adenosylcobalamin (Ado-cobalamin). Also synthesizes adenosylcobalamin 5'-phosphate from adenosylcobinamide-GDP and alpha-ribazole 5'-phosphate. This Saccharolobus solfataricus (strain ATCC 35092 / DSM 1617 / JCM 11322 / P2) (Sulfolobus solfataricus) protein is Adenosylcobinamide-GDP ribazoletransferase.